A 296-amino-acid polypeptide reads, in one-letter code: Ribosomal RNA small subunit methyltransferase H (296 aa).

S-adenosyl-L-methionine-binding positions include 38-40 (GVH), Glu57, Phe88, Asp103, and His110.

Belongs to the methyltransferase superfamily. RsmH family.

The protein localises to the cytoplasm. The enzyme catalyses cytidine(1402) in 16S rRNA + S-adenosyl-L-methionine = N(4)-methylcytidine(1402) in 16S rRNA + S-adenosyl-L-homocysteine + H(+). Functionally, specifically methylates the N4 position of cytidine in position 1402 (C1402) of 16S rRNA. This chain is Ribosomal RNA small subunit methyltransferase H, found in Borreliella burgdorferi (strain ZS7) (Borrelia burgdorferi).